We begin with the raw amino-acid sequence, 177 residues long: Adenine phosphoribosyltransferase (177 aa).

It belongs to the purine/pyrimidine phosphoribosyltransferase family. As to quaternary structure, homodimer.

The protein resides in the cytoplasm. It carries out the reaction AMP + diphosphate = 5-phospho-alpha-D-ribose 1-diphosphate + adenine. It functions in the pathway purine metabolism; AMP biosynthesis via salvage pathway; AMP from adenine: step 1/1. Catalyzes a salvage reaction resulting in the formation of AMP, that is energically less costly than de novo synthesis. The sequence is that of Adenine phosphoribosyltransferase from Leptospira borgpetersenii serovar Hardjo-bovis (strain JB197).